The primary structure comprises 162 residues: Crossover junction endodeoxyribonuclease RuvC (162 aa).

Residues aspartate 8, glutamate 69, and histidine 141 contribute to the active site. Mg(2+) contacts are provided by aspartate 8, glutamate 69, and histidine 141.

The protein belongs to the RuvC family. As to quaternary structure, homodimer which binds Holliday junction (HJ) DNA. The HJ becomes 2-fold symmetrical on binding to RuvC with unstacked arms; it has a different conformation from HJ DNA in complex with RuvA. In the full resolvosome a probable DNA-RuvA(4)-RuvB(12)-RuvC(2) complex forms which resolves the HJ. Requires Mg(2+) as cofactor.

The protein resides in the cytoplasm. It carries out the reaction Endonucleolytic cleavage at a junction such as a reciprocal single-stranded crossover between two homologous DNA duplexes (Holliday junction).. Its function is as follows. The RuvA-RuvB-RuvC complex processes Holliday junction (HJ) DNA during genetic recombination and DNA repair. Endonuclease that resolves HJ intermediates. Cleaves cruciform DNA by making single-stranded nicks across the HJ at symmetrical positions within the homologous arms, yielding a 5'-phosphate and a 3'-hydroxyl group; requires a central core of homology in the junction. The consensus cleavage sequence is 5'-(A/T)TT(C/G)-3'. Cleavage occurs on the 3'-side of the TT dinucleotide at the point of strand exchange. HJ branch migration catalyzed by RuvA-RuvB allows RuvC to scan DNA until it finds its consensus sequence, where it cleaves and resolves the cruciform DNA. This is Crossover junction endodeoxyribonuclease RuvC from Wolbachia sp. subsp. Drosophila simulans (strain wRi).